The primary structure comprises 1364 residues: Trifunctional purine biosynthetic protein adenosine-3 (1364 aa).

The 208-residue stretch at 114-321 (KDFMLRHGIP…LFEVMQACCS (208 aa)) folds into the ATP-grasp domain. 140–202 (IRSAPYQALV…EELLEGEEIS (63 aa)) provides a ligand contact to ATP. Mn(2+)-binding residues include Glu291 and Asn293. The segment at 435 to 1154 (AIATAPGLSY…ARTQRMLSQP (720 aa)) is AIRS. The interval 1155-1364 (RKRVAVLISG…EAPKDIKDSQ (210 aa)) is GART. Residue 1166 to 1168 (GSN) coordinates N(1)-(5-phospho-beta-D-ribosyl)glycinamide. (6R)-10-formyltetrahydrofolate-binding positions include Arg1221, 1246-1249 (MRIL), and Asn1263. His1265 (proton donor) is an active-site residue. 1297–1301 (DEGVD) is a (6R)-10-formyltetrahydrofolate binding site. 1327-1330 (HYAE) contacts N(1)-(5-phospho-beta-D-ribosyl)glycinamide.

This sequence in the N-terminal section; belongs to the GARS family. It in the central section; belongs to the AIR synthase family. The protein in the C-terminal section; belongs to the GART family.

It catalyses the reaction 5-phospho-beta-D-ribosylamine + glycine + ATP = N(1)-(5-phospho-beta-D-ribosyl)glycinamide + ADP + phosphate + H(+). The enzyme catalyses 2-formamido-N(1)-(5-O-phospho-beta-D-ribosyl)acetamidine + ATP = 5-amino-1-(5-phospho-beta-D-ribosyl)imidazole + ADP + phosphate + H(+). It carries out the reaction N(1)-(5-phospho-beta-D-ribosyl)glycinamide + (6R)-10-formyltetrahydrofolate = N(2)-formyl-N(1)-(5-phospho-beta-D-ribosyl)glycinamide + (6S)-5,6,7,8-tetrahydrofolate + H(+). It participates in purine metabolism; IMP biosynthesis via de novo pathway; 5-amino-1-(5-phospho-D-ribosyl)imidazole from N(2)-formyl-N(1)-(5-phospho-D-ribosyl)glycinamide: step 2/2. It functions in the pathway purine metabolism; IMP biosynthesis via de novo pathway; N(1)-(5-phospho-D-ribosyl)glycinamide from 5-phospho-alpha-D-ribose 1-diphosphate: step 2/2. Its pathway is purine metabolism; IMP biosynthesis via de novo pathway; N(2)-formyl-N(1)-(5-phospho-D-ribosyl)glycinamide from N(1)-(5-phospho-D-ribosyl)glycinamide (10-formyl THF route): step 1/1. Its function is as follows. Trifunctional enzyme required for de novo purine biosynthesis. This is Trifunctional purine biosynthetic protein adenosine-3 (ade3) from Drosophila pseudoobscura pseudoobscura (Fruit fly).